Reading from the N-terminus, the 828-residue chain is Translation initiation factor IF-2 (828 aa).

2 disordered regions span residues Ser48–Phe76 and Ala112–Ile137. The segment covering Tyr49–Leu58 has biased composition (polar residues). The segment covering Leu65–Glu74 has biased composition (low complexity). Positions Asp116–Ser126 are enriched in acidic residues. The segment covering Asp127 to Ile137 has biased composition (basic and acidic residues). One can recognise a tr-type G domain in the interval Ser326 to Lys496. Residues Gly335–Thr342 form a G1 region. Gly335–Thr342 contributes to the GTP binding site. A G2 region spans residues Gly360–His364. Residues Asp382–Gly385 are G3. GTP-binding positions include Asp382–His386 and Asn436–Asp439. A G4 region spans residues Asn436 to Asp439. A G5 region spans residues Ser472–Leu474.

It belongs to the TRAFAC class translation factor GTPase superfamily. Classic translation factor GTPase family. IF-2 subfamily.

It localises to the cytoplasm. Functionally, one of the essential components for the initiation of protein synthesis. Protects formylmethionyl-tRNA from spontaneous hydrolysis and promotes its binding to the 30S ribosomal subunits. Also involved in the hydrolysis of GTP during the formation of the 70S ribosomal complex. In Rickettsia bellii (strain RML369-C), this protein is Translation initiation factor IF-2.